Here is a 288-residue protein sequence, read N- to C-terminus: MYFTRDPVIETVITSREGYKLSIRNSKHLSQDPFVVEAIEVVRLGETSFFRNCDHSKPFLLPASDYEVMEIRDAKINLKAVGLDRGVKIVGSREALLKMPKVAPIVSVSEDNTIVSEEEVVADSTVAAPASTPVAPMSKKERRKEFKNEKWKDKKKQGRRRNSKEIADAVGSSQEMIDTVAEECLQESSSEEGDFSERRFSLIPPPTRLISDGPEEPEEESQPVTSVDLNESLNALVSESCNVIESILADEDTVVFTKEKDQTAEESQEQPSLSLEETLVHDRISSEE.

Positions 126–136 (VAAPASTPVAP) are enriched in low complexity. 2 disordered regions span residues 126-227 (VAAP…VTSV) and 258-288 (KEKD…SSEE). Residues 143–152 (RKEFKNEKWK) are compositionally biased toward basic and acidic residues. The segment covering 153-162 (DKKKQGRRRN) has biased composition (basic residues). The segment covering 180 to 194 (VAEECLQESSSEEGD) has biased composition (acidic residues). Residues 278-288 (TLVHDRISSEE) show a composition bias toward basic and acidic residues.

This sequence belongs to the chlamydial CPn_0623/CT_504/TC_0791 family.

This is an uncharacterized protein from Chlamydia trachomatis serovar D (strain ATCC VR-885 / DSM 19411 / UW-3/Cx).